The chain runs to 446 residues: uncharacterized protein (446 aa).

12 helical membrane passes run 20 to 40 (LIGV…IAIV), 42 to 62 (SGFS…FVFE), 95 to 115 (WVYW…ISLF), 127 to 147 (VFAS…LSVF), 160 to 180 (AAIF…LSGG), 205 to 225 (LIYA…AVHL), 237 to 257 (LMLA…LLLV), 284 to 304 (IFNG…LFAV), 331 to 351 (WPAL…SLVL), 355 to 375 (IYEH…LFIL), 388 to 408 (GKTQ…GTLF), and 414 to 434 (PGFF…MIYQ).

This sequence belongs to the amino acid-polyamine-organocation (APC) superfamily.

The protein resides in the cell membrane. This is an uncharacterized protein from Bacillus subtilis (strain 168).